The following is a 135-amino-acid chain: MVMPLVLSLALTPPPLCHATLVDPRTTLQCHVRSYTFRATKPPIVNENGDPVTCQGDVRVSSCWGRCDSSEIGDYKMPFKISNHPVCTYTGRVSRTVRLSQCAGYPDPTVQVFDATGCACQFCNSETQLCEKLNG.

An N-terminal signal peptide occupies residues 1–19 (MVMPLVLSLALTPPPLCHA). 5 disulfide bridges follow: Cys30–Cys87, Cys54–Cys102, Cys63–Cys118, Cys67–Cys120, and Cys123–Cys130.

Belongs to the glycoprotein hormones subunit beta family. In terms of assembly, heterodimer with GPHA2; non-covalently-linked. Expressed by the venom duct.

It is found in the secreted. The protein is Thyrostimulin beta-5 subunit of Conus victoriae (Queen Victoria cone).